Reading from the N-terminus, the 125-residue chain is Fluoride-specific ion channel FluC (125 aa).

4 consecutive transmembrane segments (helical) span residues 4 to 24 (WLFV…ISEL), 35 to 55 (YGTL…FALI), 69 to 89 (LMVG…DTVV), and 103 to 123 (MGLN…LVAS). Na(+) contacts are provided by glycine 75 and threonine 78.

The protein belongs to the fluoride channel Fluc/FEX (TC 1.A.43) family.

It localises to the cell inner membrane. The catalysed reaction is fluoride(in) = fluoride(out). Na(+) is not transported, but it plays an essential structural role and its presence is essential for fluoride channel function. Functionally, fluoride-specific ion channel. Important for reducing fluoride concentration in the cell, thus reducing its toxicity. In Aeromonas salmonicida (strain A449), this protein is Fluoride-specific ion channel FluC.